A 273-amino-acid polypeptide reads, in one-letter code: Large ribosomal subunit protein uL2 (273 aa).

The disordered stretch occupies residues 228–273 (VDHPHGGGEGKTSGGRHPVTPWGFPTKGKKTRKNKRTSKFIVKKRK). The segment covering 254–273 (KGKKTRKNKRTSKFIVKKRK) has biased composition (basic residues).

It belongs to the universal ribosomal protein uL2 family. In terms of assembly, part of the 50S ribosomal subunit. Forms a bridge to the 30S subunit in the 70S ribosome.

In terms of biological role, one of the primary rRNA binding proteins. Required for association of the 30S and 50S subunits to form the 70S ribosome, for tRNA binding and peptide bond formation. It has been suggested to have peptidyltransferase activity; this is somewhat controversial. Makes several contacts with the 16S rRNA in the 70S ribosome. This chain is Large ribosomal subunit protein uL2, found in Rickettsia peacockii (strain Rustic).